Consider the following 382-residue polypeptide: Intermediate transcription factor 3 large subunit (382 aa).

This sequence belongs to the orthopoxvirus OPG150 family. In terms of assembly, heterodimerizes with protein A8 to form the virus intermediate transcription factor (VITF)-3.

Its function is as follows. Acts with RNA polymerase to initiate transcription from intermediate gene promoters. This is Intermediate transcription factor 3 large subunit (OPG150) from Cynomys gunnisoni (Gunnison's prairie dog).